The following is a 105-amino-acid chain: Large ribosomal subunit protein uL24 (105 aa).

The disordered stretch occupies residues 67-105 (HISNLNPVDPKTGKATRIGRRKSSEGTLVRYSKKSGEEI).

It belongs to the universal ribosomal protein uL24 family. Part of the 50S ribosomal subunit.

Functionally, one of two assembly initiator proteins, it binds directly to the 5'-end of the 23S rRNA, where it nucleates assembly of the 50S subunit. Its function is as follows. One of the proteins that surrounds the polypeptide exit tunnel on the outside of the subunit. The chain is Large ribosomal subunit protein uL24 from Bacteroides thetaiotaomicron (strain ATCC 29148 / DSM 2079 / JCM 5827 / CCUG 10774 / NCTC 10582 / VPI-5482 / E50).